We begin with the raw amino-acid sequence, 339 residues long: DNA-directed RNA polymerase subunit alpha (339 aa).

Positions 1-233 (MVREEVAGST…DLFLPFLHAE (233 aa)) are alpha N-terminal domain (alpha-NTD). The interval 264–339 (KKGIPLNCIF…IDLLKNKLSF (76 aa)) is alpha C-terminal domain (alpha-CTD).

Belongs to the RNA polymerase alpha chain family. As to quaternary structure, in plastids the minimal PEP RNA polymerase catalytic core is composed of four subunits: alpha, beta, beta', and beta''. When a (nuclear-encoded) sigma factor is associated with the core the holoenzyme is formed, which can initiate transcription.

It is found in the plastid. The protein localises to the chloroplast. It catalyses the reaction RNA(n) + a ribonucleoside 5'-triphosphate = RNA(n+1) + diphosphate. Functionally, DNA-dependent RNA polymerase catalyzes the transcription of DNA into RNA using the four ribonucleoside triphosphates as substrates. This chain is DNA-directed RNA polymerase subunit alpha, found in Elymus hystrix (Eastern bottlebrush grass).